The following is a 142-amino-acid chain: Putative pre-16S rRNA nuclease (142 aa).

It belongs to the YqgF nuclease family.

It localises to the cytoplasm. Could be a nuclease involved in processing of the 5'-end of pre-16S rRNA. In Lactobacillus acidophilus (strain ATCC 700396 / NCK56 / N2 / NCFM), this protein is Putative pre-16S rRNA nuclease.